We begin with the raw amino-acid sequence, 614 residues long: Glutamine--fructose-6-phosphate aminotransferase [isomerizing] (614 aa).

Cys-2 (nucleophile; for GATase activity) is an active-site residue. Residues 2 to 223 (CGIIGYIGRR…DGEMAVVTRD (222 aa)) enclose the Glutamine amidotransferase type-2 domain. SIS domains are found at residues 292 to 431 (YLDR…GRTI) and 463 to 604 (IAVK…VDRP). Lys-609 acts as the For Fru-6P isomerization activity in catalysis.

Homodimer.

Its subcellular location is the cytoplasm. The enzyme catalyses D-fructose 6-phosphate + L-glutamine = D-glucosamine 6-phosphate + L-glutamate. Functionally, catalyzes the first step in hexosamine metabolism, converting fructose-6P into glucosamine-6P using glutamine as a nitrogen source. The polypeptide is Glutamine--fructose-6-phosphate aminotransferase [isomerizing] (Chlorobaculum tepidum (strain ATCC 49652 / DSM 12025 / NBRC 103806 / TLS) (Chlorobium tepidum)).